The sequence spans 750 residues: Methylmalonyl-CoA mutase, mitochondrial (750 aa).

The N-terminal 32 residues, 1–32, are a transit peptide targeting the mitochondrion; it reads MLRVKNQLFLLSPHYLKQVKESSGSRLIRQRF. Q50 contributes to the malonyl-CoA binding site. N6-acetyllysine is present on K89. Malonyl-CoA is bound by residues 96 to 99 and 106 to 110; these read YPTM and TIRQY. The residue at position 212 (K212) is an N6-acetyllysine. Residues 216-218, R228, K255, H265, and 304-306 each bind malonyl-CoA; these read TIQ and RLS. K335 bears the N6-acetyllysine mark. K343 is modified (N6-succinyllysine). The residue at position 481 (S481) is a Phosphoserine. Residue K595 is modified to N6-succinyllysine. K602 carries the post-translational modification N6-acetyllysine. The region spanning 614-746 is the B12-binding domain; it reads RPRLLVAKMG…DDIEKCLEKK (133 aa). H627 lines the adenosylcob(III)alamin pocket.

The protein belongs to the methylmalonyl-CoA mutase family. Homodimer. Interacts (the apoenzyme form) with MMAA; the interaction is GTP dependent. Requires adenosylcob(III)alamin as cofactor.

It is found in the mitochondrion matrix. The protein resides in the mitochondrion. It localises to the cytoplasm. The enzyme catalyses (R)-methylmalonyl-CoA = succinyl-CoA. Its activity is regulated as follows. Inhibited by itaconyl-CoA, a metabolite that inactivates the coenzyme B12 cofactor. Functionally, catalyzes the reversible isomerization of methylmalonyl-CoA (MMCoA) (generated from branched-chain amino acid metabolism and degradation of dietary odd chain fatty acids and cholesterol) to succinyl-CoA (3-carboxypropionyl-CoA), a key intermediate of the tricarboxylic acid cycle. In Macaca fascicularis (Crab-eating macaque), this protein is Methylmalonyl-CoA mutase, mitochondrial (MMUT).